A 239-amino-acid polypeptide reads, in one-letter code: Probable replication-associated protein repA2 (239 aa).

The protein belongs to the IncFII RepA family.

This protein is essential for plasmid replication; it is involved in copy control functions. The protein is Probable replication-associated protein repA2 (repA2) of Buchnera aphidicola subsp. Baizongia pistaciae (strain Bp).